Reading from the N-terminus, the 227-residue chain is Isopentenyl-diphosphate Delta-isomerase 1 (227 aa).

Position 36 (Lys-36) interacts with substrate. Residues His-40 and His-51 each coordinate Mg(2+). Residues 49 to 199 enclose the Nudix hydrolase domain; the sequence is LLHRAFSVFL…EIKITPWFQI (151 aa). Substrate is bound by residues Arg-70 and Lys-74. The active site involves Cys-86. Substrate is bound at residue Ser-87. Positions 146 and 148 each coordinate Mg(2+). Glu-148 is an active-site residue. Lys-176 carries the N6-acetyllysine modification. Residues 225–227 carry the Microbody targeting signal motif; the sequence is HRM.

This sequence belongs to the IPP isomerase type 1 family. In terms of assembly, monomer. Mg(2+) serves as cofactor.

It is found in the peroxisome. It carries out the reaction isopentenyl diphosphate = dimethylallyl diphosphate. It functions in the pathway isoprenoid biosynthesis; dimethylallyl diphosphate biosynthesis; dimethylallyl diphosphate from isopentenyl diphosphate: step 1/1. In terms of biological role, catalyzes the 1,3-allylic rearrangement of the homoallylic substrate isopentenyl (IPP) to its highly electrophilic allylic isomer, dimethylallyl diphosphate (DMAPP). The polypeptide is Isopentenyl-diphosphate Delta-isomerase 1 (IDI1) (Macaca fascicularis (Crab-eating macaque)).